The following is a 195-amino-acid chain: MYVAIEGVDTCGKSTQIQLLKAYYPQAVFTKEPGGSIIGEHIRDLVLFAPKKYGFTLDERAELMLFLADRAQHYAQVLLPHKDKLIISDRSVISGIAYAKSIDIAQSIALNDFVLRGMLPDLVVILELDEKSLKERIESKSHDNIESRGISYMLEIQKCFKNVVTQMNLKYIVLDATQDKERICAQIREHINILV.

7–14 (GVDTCGKS) is a binding site for ATP.

Belongs to the thymidylate kinase family.

The catalysed reaction is dTMP + ATP = dTDP + ADP. Its function is as follows. Phosphorylation of dTMP to form dTDP in both de novo and salvage pathways of dTTP synthesis. The polypeptide is Thymidylate kinase (Helicobacter hepaticus (strain ATCC 51449 / 3B1)).